A 314-amino-acid chain; its full sequence is PDZ domain-containing protein GIPC2 (314 aa).

A compositionally biased stretch (basic residues) spans 1–12 (MPLGLRGKKKAA). The interval 1–36 (MPLGLRGKKKAAKSKEAARLVEGERSSGSQGVPGPP) is disordered. A compositionally biased stretch (basic and acidic residues) spans 13–25 (KSKEAARLVEGER). In terms of domain architecture, PDZ spans 117–197 (EVNVYKSEDS…EELFTLQLIE (81 aa)).

Belongs to the GIPC family. In terms of assembly, probably interacts with SEMA5A. Expressed in kidney and lung (at protein level).

Its subcellular location is the cytoplasm. The chain is PDZ domain-containing protein GIPC2 (Gipc2) from Mus musculus (Mouse).